Consider the following 62-residue polypeptide: Large ribosomal subunit protein bL28 (62 aa).

Positions 1–27 are disordered; it reads MARECYITGRKARSGNKRSHAMNKSKR. A compositionally biased stretch (basic residues) spans 10-27; sequence RKARSGNKRSHAMNKSKR.

It belongs to the bacterial ribosomal protein bL28 family.

The chain is Large ribosomal subunit protein bL28 from Shouchella clausii (strain KSM-K16) (Alkalihalobacillus clausii).